The chain runs to 379 residues: UDP-4-amino-4-deoxy-L-arabinose--oxoglutarate aminotransferase (379 aa).

Position 182 is an N6-(pyridoxal phosphate)lysine (Lys-182).

This sequence belongs to the DegT/DnrJ/EryC1 family. ArnB subfamily. As to quaternary structure, homodimer. Pyridoxal 5'-phosphate serves as cofactor.

It catalyses the reaction UDP-4-amino-4-deoxy-beta-L-arabinose + 2-oxoglutarate = UDP-beta-L-threo-pentopyranos-4-ulose + L-glutamate. The protein operates within nucleotide-sugar biosynthesis; UDP-4-deoxy-4-formamido-beta-L-arabinose biosynthesis; UDP-4-deoxy-4-formamido-beta-L-arabinose from UDP-alpha-D-glucuronate: step 2/3. It functions in the pathway bacterial outer membrane biogenesis; lipopolysaccharide biosynthesis. Its function is as follows. Catalyzes the conversion of UDP-4-keto-arabinose (UDP-Ara4O) to UDP-4-amino-4-deoxy-L-arabinose (UDP-L-Ara4N). The modified arabinose is attached to lipid A and is required for resistance to polymyxin and cationic antimicrobial peptides. This chain is UDP-4-amino-4-deoxy-L-arabinose--oxoglutarate aminotransferase, found in Salmonella schwarzengrund (strain CVM19633).